The following is a 181-amino-acid chain: Ribonuclease M5 (181 aa).

Residues 5–88 (KEIIVVEGKD…IKHAYLNTKD (84 aa)) form the Toprim domain. Residues glutamate 11, aspartate 57, and aspartate 59 each contribute to the Mg(2+) site.

The protein belongs to the ribonuclease M5 family. Mg(2+) is required as a cofactor.

It is found in the cytoplasm. The enzyme catalyses Endonucleolytic cleavage of RNA, removing 21 and 42 nucleotides, respectively, from the 5'- and 3'-termini of a 5S-rRNA precursor.. Required for correct processing of both the 5' and 3' ends of 5S rRNA precursor. Cleaves both sides of a double-stranded region yielding mature 5S rRNA in one step. This chain is Ribonuclease M5, found in Borreliella burgdorferi (strain ATCC 35210 / DSM 4680 / CIP 102532 / B31) (Borrelia burgdorferi).